The primary structure comprises 25 residues: Caerin-1.10 (25 aa).

The residue at position 25 (L25) is a Leucine amide.

The protein belongs to the frog skin active peptide (FSAP) family. Caerin subfamily. Expressed by the skin dorsal glands.

It localises to the secreted. In terms of biological role, antibacterial peptide with wide spectrum of activity. This chain is Caerin-1.10, found in Litoria rothii (Roth's tree frog).